The chain runs to 307 residues: tRNA dimethylallyltransferase (307 aa).

Residue 10-17 (GPTASGKS) participates in ATP binding. 12 to 17 (TASGKS) provides a ligand contact to substrate. Interaction with substrate tRNA stretches follow at residues 35-38 (DSMQ) and 159-163 (QRLCR).

This sequence belongs to the IPP transferase family. In terms of assembly, monomer. It depends on Mg(2+) as a cofactor.

It carries out the reaction adenosine(37) in tRNA + dimethylallyl diphosphate = N(6)-dimethylallyladenosine(37) in tRNA + diphosphate. Functionally, catalyzes the transfer of a dimethylallyl group onto the adenine at position 37 in tRNAs that read codons beginning with uridine, leading to the formation of N6-(dimethylallyl)adenosine (i(6)A). This Phenylobacterium zucineum (strain HLK1) protein is tRNA dimethylallyltransferase.